A 173-amino-acid polypeptide reads, in one-letter code: Adenine phosphoribosyltransferase (173 aa).

It belongs to the purine/pyrimidine phosphoribosyltransferase family. Homodimer.

The protein localises to the cytoplasm. It carries out the reaction AMP + diphosphate = 5-phospho-alpha-D-ribose 1-diphosphate + adenine. The protein operates within purine metabolism; AMP biosynthesis via salvage pathway; AMP from adenine: step 1/1. In terms of biological role, catalyzes a salvage reaction resulting in the formation of AMP, that is energically less costly than de novo synthesis. The sequence is that of Adenine phosphoribosyltransferase from Thermoanaerobacter sp. (strain X514).